Consider the following 146-residue polypeptide: Hemoglobin subunit beta (146 aa).

The region spanning 2-146 is the Globin domain; sequence HWSAEEKQLI…VAHALARKYH (145 aa). Heme b is bound by residues His63 and His92.

Belongs to the globin family. As to quaternary structure, heterotetramer of two alpha chains and two beta chains. In terms of tissue distribution, red blood cells.

Involved in oxygen transport from the lung to the various peripheral tissues. The chain is Hemoglobin subunit beta (HBB) from Anser anser anser (Western greylag goose).